The following is a 183-amino-acid chain: Deoxyuridine 5'-triphosphate nucleotidohydrolase (183 aa).

Residues 67-69, N80, 84-86, and K94 contribute to the substrate site; these read RSG and TID. Positions 138 to 183 are disordered; the sequence is RAEGGFGSTGGHAGLDPASGTSGQVAEGGPTGGNRYASVVSDREGQ. Gly residues predominate over residues 141 to 150; that stretch reads GGFGSTGGHA.

It belongs to the dUTPase family. Mg(2+) is required as a cofactor.

The enzyme catalyses dUTP + H2O = dUMP + diphosphate + H(+). Its pathway is pyrimidine metabolism; dUMP biosynthesis; dUMP from dCTP (dUTP route): step 2/2. In terms of biological role, this enzyme is involved in nucleotide metabolism: it produces dUMP, the immediate precursor of thymidine nucleotides and it decreases the intracellular concentration of dUTP so that uracil cannot be incorporated into DNA. This is Deoxyuridine 5'-triphosphate nucleotidohydrolase from Streptomyces coelicolor (strain ATCC BAA-471 / A3(2) / M145).